Reading from the N-terminus, the 68-residue chain is Medusin-DA1 (68 aa).

The signal sequence occupies residues 1 to 22; sequence MAFLKKSLFLVLFLGLVSLSVC. Positions 23–48 are excised as a propeptide; that stretch reads EEEKRENEEEKNEQEEDDREERNEEK. Residues 25 to 47 form a disordered region; sequence EKRENEEEKNEQEEDDREERNEE. Residues 31-41 show a composition bias toward acidic residues; it reads EEKNEQEEDDR. L67 is subject to Leucine amide.

Belongs to the frog skin active peptide (FSAP) family. Medusin subfamily. As to expression, expressed by the skin glands.

It localises to the secreted. Antimicrobial peptide with activity against Gram-positive bacteria (S.aureus, MIC=32 mg/L) and fungi (C.albicans, MIC=64 mg/L). Shows weak hemolytic activity. This chain is Medusin-DA1, found in Agalychnis dacnicolor (Giant Mexican leaf frog).